The following is a 335-amino-acid chain: Probable UDP-N-acetylglucosamine pyrophosphorylase (335 aa).

Residues 45 to 48 (LSGG) carry the Substrate binding motif. Residues 45-48 (LSGG), Lys59, Gln120, and Gly145 contribute to the UTP site. Asn146 is a substrate binding site. UTP is bound at residue Asp170. Positions 218 to 219 (EY) match the Substrate binding motif. Lys278 contacts UTP. Position 308 (Lys308) interacts with substrate.

This sequence belongs to the UDPGP type 1 family.

Its subcellular location is the cytoplasm. The catalysed reaction is N-acetyl-alpha-D-glucosamine 1-phosphate + UTP + H(+) = UDP-N-acetyl-alpha-D-glucosamine + diphosphate. It functions in the pathway nucleotide-sugar biosynthesis; UDP-N-acetyl-alpha-D-glucosamine biosynthesis; UDP-N-acetyl-alpha-D-glucosamine from N-acetyl-alpha-D-glucosamine 1-phosphate: step 1/1. In Encephalitozoon cuniculi (strain GB-M1) (Microsporidian parasite), this protein is Probable UDP-N-acetylglucosamine pyrophosphorylase (UAP1).